The primary structure comprises 546 residues: 6'''-hydroxyparomomycin C oxidase (546 aa).

The interval 1 to 30 (MERLRGPSPLENTTARHPAPLGPAHRDGLE) is disordered. Catalysis depends on His-475, which acts as the Proton acceptor.

It belongs to the GMC oxidoreductase family. The cofactor is FAD.

It participates in antibiotic biosynthesis; lividomycin biosynthesis. Its function is as follows. Glucosaminyl-6'-oxidase involved in the biosynthetic pathway of lividomycin by mediating FAD-dependent dehydrogenation of 6'''-hydroxyparomomycin to paromomycin. This chain is 6'''-hydroxyparomomycin C oxidase (livQ), found in Streptomyces lividus.